We begin with the raw amino-acid sequence, 373 residues long: 3-dehydroquinate synthase (373 aa).

NAD(+) is bound by residues Glu67–Lys72, Gly101–Asp105, Thr125–Thr126, Lys138, and Lys147. 3 residues coordinate Zn(2+): Glu180, His240, and His256.

Belongs to the sugar phosphate cyclases superfamily. Dehydroquinate synthase family. NAD(+) serves as cofactor. Co(2+) is required as a cofactor. Requires Zn(2+) as cofactor.

The protein resides in the cytoplasm. The catalysed reaction is 7-phospho-2-dehydro-3-deoxy-D-arabino-heptonate = 3-dehydroquinate + phosphate. Its pathway is metabolic intermediate biosynthesis; chorismate biosynthesis; chorismate from D-erythrose 4-phosphate and phosphoenolpyruvate: step 2/7. Catalyzes the conversion of 3-deoxy-D-arabino-heptulosonate 7-phosphate (DAHP) to dehydroquinate (DHQ). The protein is 3-dehydroquinate synthase of Chlamydia trachomatis serovar A (strain ATCC VR-571B / DSM 19440 / HAR-13).